The primary structure comprises 206 residues: Uridine kinase (206 aa).

9 to 16 (GGSGSGKT) is an ATP binding site.

This sequence belongs to the uridine kinase family. As to quaternary structure, monomer.

It localises to the cytoplasm. It carries out the reaction uridine + ATP = UMP + ADP + H(+). It catalyses the reaction cytidine + ATP = CMP + ADP + H(+). It participates in pyrimidine metabolism; CTP biosynthesis via salvage pathway; CTP from cytidine: step 1/3. It functions in the pathway pyrimidine metabolism; UMP biosynthesis via salvage pathway; UMP from uridine: step 1/1. This chain is Uridine kinase (udk), found in Borreliella burgdorferi (strain ATCC 35210 / DSM 4680 / CIP 102532 / B31) (Borrelia burgdorferi).